The primary structure comprises 337 residues: 15-cis-phytoene synthase (337 aa).

Belongs to the phytoene/squalene synthase family. Requires ATP as cofactor. It depends on Mn(2+) as a cofactor. The cofactor is Mg(2+).

The enzyme catalyses 2 (2E,6E,10E)-geranylgeranyl diphosphate = 15-cis-phytoene + 2 diphosphate. Its pathway is carotenoid biosynthesis; phytoene biosynthesis. Functionally, involved in the biosynthesis of carotenoids. Catalyzes the condensation of two molecules of geranylgeranyl diphosphate (GGPP) to give prephytoene diphosphate (PPPP) and the subsequent rearrangement of the cyclopropylcarbinyl intermediate to yield 15-cis-phytoene. This is 15-cis-phytoene synthase (crtB) from Synechocystis sp. (strain ATCC 27184 / PCC 6803 / Kazusa).